We begin with the raw amino-acid sequence, 502 residues long: Glycogen synthase 1 (502 aa).

Lys18 provides a ligand contact to ADP-alpha-D-glucose.

It belongs to the glycosyltransferase 1 family. Bacterial/plant glycogen synthase subfamily.

The catalysed reaction is [(1-&gt;4)-alpha-D-glucosyl](n) + ADP-alpha-D-glucose = [(1-&gt;4)-alpha-D-glucosyl](n+1) + ADP + H(+). It functions in the pathway glycan biosynthesis; glycogen biosynthesis. In terms of biological role, synthesizes alpha-1,4-glucan chains using ADP-glucose. This is Glycogen synthase 1 from Geobacter metallireducens (strain ATCC 53774 / DSM 7210 / GS-15).